A 556-amino-acid chain; its full sequence is 2-succinyl-5-enolpyruvyl-6-hydroxy-3-cyclohexene-1-carboxylate synthase (556 aa).

It belongs to the TPP enzyme family. MenD subfamily. Homodimer. It depends on Mg(2+) as a cofactor. Mn(2+) is required as a cofactor. Requires thiamine diphosphate as cofactor.

It carries out the reaction isochorismate + 2-oxoglutarate + H(+) = 5-enolpyruvoyl-6-hydroxy-2-succinyl-cyclohex-3-ene-1-carboxylate + CO2. The protein operates within quinol/quinone metabolism; 1,4-dihydroxy-2-naphthoate biosynthesis; 1,4-dihydroxy-2-naphthoate from chorismate: step 2/7. It functions in the pathway quinol/quinone metabolism; menaquinone biosynthesis. Functionally, catalyzes the thiamine diphosphate-dependent decarboxylation of 2-oxoglutarate and the subsequent addition of the resulting succinic semialdehyde-thiamine pyrophosphate anion to isochorismate to yield 2-succinyl-5-enolpyruvyl-6-hydroxy-3-cyclohexene-1-carboxylate (SEPHCHC). The chain is 2-succinyl-5-enolpyruvyl-6-hydroxy-3-cyclohexene-1-carboxylate synthase from Salmonella choleraesuis (strain SC-B67).